A 569-amino-acid chain; its full sequence is Spermatogenesis-associated protein 16 (569 aa).

Basic and acidic residues predominate over residues 67 to 92 (KGIKEKQSNDLEKAAFKRKAEGEEKP). A disordered region spans residues 67–96 (KGIKEKQSNDLEKAAFKRKAEGEEKPTRKK).

This sequence belongs to the SPATA16 family. In terms of tissue distribution, expressed in testis.

Its subcellular location is the golgi apparatus. The protein localises to the cytoplasmic vesicle. The protein resides in the secretory vesicle. It is found in the acrosome. Its function is as follows. Essential for spermiogenesis and male fertility. Involved in the formation of sperm acrosome during spermatogenesis. The protein is Spermatogenesis-associated protein 16 (SPATA16) of Homo sapiens (Human).